The primary structure comprises 401 residues: Imidazolonepropionase (401 aa).

Residues H66 and H68 each coordinate Fe(3+). Zn(2+) is bound by residues H66 and H68. Positions 75, 138, and 171 each coordinate 4-imidazolone-5-propanoate. Y138 contributes to the N-formimidoyl-L-glutamate binding site. H236 provides a ligand contact to Fe(3+). Position 236 (H236) interacts with Zn(2+). Position 239 (Q239) interacts with 4-imidazolone-5-propanoate. D311 provides a ligand contact to Fe(3+). D311 is a Zn(2+) binding site. Residues N313 and G315 each contribute to the N-formimidoyl-L-glutamate site. Residue T316 participates in 4-imidazolone-5-propanoate binding.

It belongs to the metallo-dependent hydrolases superfamily. HutI family. Requires Zn(2+) as cofactor. Fe(3+) serves as cofactor.

It localises to the cytoplasm. The enzyme catalyses 4-imidazolone-5-propanoate + H2O = N-formimidoyl-L-glutamate. It functions in the pathway amino-acid degradation; L-histidine degradation into L-glutamate; N-formimidoyl-L-glutamate from L-histidine: step 3/3. Its function is as follows. Catalyzes the hydrolytic cleavage of the carbon-nitrogen bond in imidazolone-5-propanoate to yield N-formimidoyl-L-glutamate. It is the third step in the universal histidine degradation pathway. The sequence is that of Imidazolonepropionase from Pseudomonas putida (strain GB-1).